We begin with the raw amino-acid sequence, 256 residues long: 1-(5-phosphoribosyl)-5-[(5-phosphoribosylamino)methylideneamino] imidazole-4-carboxamide isomerase (256 aa).

Asp8 functions as the Proton acceptor in the catalytic mechanism. Asp129 functions as the Proton donor in the catalytic mechanism.

The protein belongs to the HisA/HisF family.

Its subcellular location is the cytoplasm. It catalyses the reaction 1-(5-phospho-beta-D-ribosyl)-5-[(5-phospho-beta-D-ribosylamino)methylideneamino]imidazole-4-carboxamide = 5-[(5-phospho-1-deoxy-D-ribulos-1-ylimino)methylamino]-1-(5-phospho-beta-D-ribosyl)imidazole-4-carboxamide. It participates in amino-acid biosynthesis; L-histidine biosynthesis; L-histidine from 5-phospho-alpha-D-ribose 1-diphosphate: step 4/9. This is 1-(5-phosphoribosyl)-5-[(5-phosphoribosylamino)methylideneamino] imidazole-4-carboxamide isomerase from Synechococcus sp. (strain CC9311).